The sequence spans 692 residues: Elongation factor G (692 aa).

Residues 8 to 283 (NRIRNIGIAA…AVIDYLPAPT (276 aa)) form the tr-type G domain. GTP-binding positions include 17–24 (AHIDAGKT), 81–85 (DTPGH), and 135–138 (NKMD).

It belongs to the TRAFAC class translation factor GTPase superfamily. Classic translation factor GTPase family. EF-G/EF-2 subfamily.

The protein localises to the cytoplasm. Catalyzes the GTP-dependent ribosomal translocation step during translation elongation. During this step, the ribosome changes from the pre-translocational (PRE) to the post-translocational (POST) state as the newly formed A-site-bound peptidyl-tRNA and P-site-bound deacylated tRNA move to the P and E sites, respectively. Catalyzes the coordinated movement of the two tRNA molecules, the mRNA and conformational changes in the ribosome. The polypeptide is Elongation factor G (fusA) (Helicobacter pylori (strain ATCC 700392 / 26695) (Campylobacter pylori)).